Consider the following 99-residue polypeptide: Signal recognition particle 19 kDa protein (99 aa).

It belongs to the SRP19 family. As to quaternary structure, part of the signal recognition particle protein translocation system, which is composed of SRP and FtsY. Archaeal SRP consists of a 7S RNA molecule of 300 nucleotides and two protein subunits: SRP54 and SRP19.

It is found in the cytoplasm. Functionally, involved in targeting and insertion of nascent membrane proteins into the cytoplasmic membrane. Binds directly to 7S RNA and mediates binding of the 54 kDa subunit of the SRP. The chain is Signal recognition particle 19 kDa protein from Pyrococcus abyssi (strain GE5 / Orsay).